Consider the following 311-residue polypeptide: Malate dehydrogenase (311 aa).

Residues 7-12 and Asp32 each bind NAD(+); that span reads GAGNVG. The substrate site is built by Arg82 and Arg88. NAD(+) contacts are provided by residues Asn95 and 118-120; that span reads VSN. Asn120 and Arg151 together coordinate substrate. Residue His175 is the Proton acceptor of the active site.

This sequence belongs to the LDH/MDH superfamily. MDH type 3 family. As to quaternary structure, homotetramer.

It carries out the reaction (S)-malate + NAD(+) = oxaloacetate + NADH + H(+). Strongly inhibited by iodoacetic acid and CuCl(2). Completely inhibited by N-ethylmaleimide and HgCl(2). Its function is as follows. Catalyzes the reversible oxidation of malate to oxaloacetate. Can use both NAD and NADP for malate oxidation, but NADPH cannot be used for oxaloacetate reduction. The sequence is that of Malate dehydrogenase from Flavobacterium frigidimaris.